The following is a 659-amino-acid chain: MALLSATAPAKTRFSLFSHEEAQHPHPHALSACCGGGASGKRQRARARVAAAMRPADAAASVAQAASPGGGGEGTRRPRVLVAGGGIGGLVLALAARRKGYEVTVFERDMSAVRGEGQYRGPIQIQSNALAALEAIDMSVAEEVMREGCVTGDRINGLVDGISGSWYIKFDTFTPAAERGLPVTRVISRMTLQQILARAVGDDAILNDSHVVDFIDDGNKVTAILEDGRKFEGDLLVGADGIWSKVRKVLFGQSEATYSEYTCYTGIADFVPPDIDTVGYRVFLGHKQYFVSSDVGAGKMQWYAFHKEPAGGTDPENGKNKRLLEIFNGWCDNVVDLINATDEEAILRRDIYDRPPTFNWGKGRVTLLGDSVHAMQPNLGQGGCMAIEDGYQLAVELEKSWQESAKSGTPMDIVSSLRRYEKERILRVSVIHGLARMAAIMATTYRPYLGVGLGPLSFLTKLRIPHPGRVGGRFFIKYGMPLMLSWVLGGNSTKLEGRPLSCRLSDKANDQLRRWFEDDDALEQAMGGEWYLLPTSSGDSQPIRLIRDEKKSLSIGSRSDPSNSTASLALPLPQISENHATITCKNKAFYVTDNGSEHGTWITDNEGRRYRVPPNFPVRFHPSDAIEFGSDKKAVFRVKVLSTLPYESARGGPQILQAA.

The transit peptide at 1–50 directs the protein to the chloroplast; sequence MALLSATAPAKTRFSLFSHEEAQHPHPHALSACCGGGASGKRQRARARVA. FAD-binding positions include 79-107 and 357-370; these read RVLVAGGGIGGLVLALAARRKGYEVTVFE and TFNWGKGRVTLLGD. Positions 553–607 constitute an FHA domain; that stretch reads LSIGSRSDPSNSTASLALPLPQISENHATITCKNKAFYVTDNGSEHGTWITDNEG.

It depends on FAD as a cofactor. In terms of tissue distribution, expressed in young microspores.

The protein localises to the plastid. The protein resides in the chloroplast membrane. It is found in the chloroplast thylakoid membrane. It catalyses the reaction all-trans-zeaxanthin + 4 reduced [2Fe-2S]-[ferredoxin] + 2 O2 + 4 H(+) = all-trans-violaxanthin + 4 oxidized [2Fe-2S]-[ferredoxin] + 2 H2O. The protein operates within plant hormone biosynthesis; abscisate biosynthesis. Zeaxanthin epoxidase that plays an important role in the xanthophyll cycle and abscisic acid (ABA) biosynthesis. Converts zeaxanthin into antheraxanthin and subsequently violaxanthin. Required for resistance to osmotic and drought stresses, seed development and dormancy. This Oryza sativa subsp. japonica (Rice) protein is Zeaxanthin epoxidase, chloroplastic (ZEP).